The sequence spans 478 residues: ATP synthase subunit beta (478 aa).

Position 164–171 (164–171 (GGAGVGKT)) interacts with ATP.

It belongs to the ATPase alpha/beta chains family. As to quaternary structure, F-type ATPases have 2 components, CF(1) - the catalytic core - and CF(0) - the membrane proton channel. CF(1) has five subunits: alpha(3), beta(3), gamma(1), delta(1), epsilon(1). CF(0) has three main subunits: a(1), b(2) and c(9-12). The alpha and beta chains form an alternating ring which encloses part of the gamma chain. CF(1) is attached to CF(0) by a central stalk formed by the gamma and epsilon chains, while a peripheral stalk is formed by the delta and b chains.

The protein resides in the cell membrane. The catalysed reaction is ATP + H2O + 4 H(+)(in) = ADP + phosphate + 5 H(+)(out). In terms of biological role, produces ATP from ADP in the presence of a proton gradient across the membrane. The catalytic sites are hosted primarily by the beta subunits. This chain is ATP synthase subunit beta, found in Streptomyces coelicolor (strain ATCC BAA-471 / A3(2) / M145).